A 563-amino-acid chain; its full sequence is Pyruvate decarboxylase (563 aa).

Pyruvate-binding residues include Asp28 and His115. Thiamine diphosphate is bound by residues Thr390 and 413-415 (GSI). Asp444 contacts Mg(2+). Thiamine diphosphate contacts are provided by residues 445–446 (GS) and 471–476 (NDGYTI). Asn471 and Gly473 together coordinate Mg(2+). A pyruvate-binding site is contributed by Glu477.

The protein belongs to the TPP enzyme family. In terms of assembly, homotetramer. Mg(2+) serves as cofactor. The cofactor is thiamine diphosphate.

It catalyses the reaction a 2-oxocarboxylate + H(+) = an aldehyde + CO2. It carries out the reaction pyruvate + H(+) = acetaldehyde + CO2. This chain is Pyruvate decarboxylase (PDC1), found in Kluyveromyces lactis (strain ATCC 8585 / CBS 2359 / DSM 70799 / NBRC 1267 / NRRL Y-1140 / WM37) (Yeast).